We begin with the raw amino-acid sequence, 149 residues long: Protein-export protein SecB (149 aa).

The protein belongs to the SecB family. Homotetramer, a dimer of dimers. One homotetramer interacts with 1 SecA dimer.

It localises to the cytoplasm. In terms of biological role, one of the proteins required for the normal export of preproteins out of the cell cytoplasm. It is a molecular chaperone that binds to a subset of precursor proteins, maintaining them in a translocation-competent state. It also specifically binds to its receptor SecA. This is Protein-export protein SecB from Hydrogenovibrio crunogenus (strain DSM 25203 / XCL-2) (Thiomicrospira crunogena).